Consider the following 321-residue polypeptide: CRISPR-associated endonuclease Cas1 2 (321 aa).

Positions 150, 213, and 228 each coordinate Mn(2+).

It belongs to the CRISPR-associated endonuclease Cas1 family. As to quaternary structure, homodimer, forms a heterotetramer with a Cas2 homodimer. It depends on Mg(2+) as a cofactor. Requires Mn(2+) as cofactor.

In terms of biological role, CRISPR (clustered regularly interspaced short palindromic repeat), is an adaptive immune system that provides protection against mobile genetic elements (viruses, transposable elements and conjugative plasmids). CRISPR clusters contain spacers, sequences complementary to antecedent mobile elements, and target invading nucleic acids. CRISPR clusters are transcribed and processed into CRISPR RNA (crRNA). Acts as a dsDNA endonuclease. Involved in the integration of spacer DNA into the CRISPR cassette. The chain is CRISPR-associated endonuclease Cas1 2 from Moorella thermoacetica (strain ATCC 39073 / JCM 9320).